The sequence spans 109 residues: Nucleoid-associated protein SO_2014 (109 aa).

The protein belongs to the YbaB/EbfC family. Homodimer.

Its subcellular location is the cytoplasm. It is found in the nucleoid. Functionally, binds to DNA and alters its conformation. May be involved in regulation of gene expression, nucleoid organization and DNA protection. The sequence is that of Nucleoid-associated protein SO_2014 from Shewanella oneidensis (strain ATCC 700550 / JCM 31522 / CIP 106686 / LMG 19005 / NCIMB 14063 / MR-1).